A 477-amino-acid chain; its full sequence is Tripartite motif-containing protein 72 (477 aa).

Zn(2+) contacts are provided by leucine 14, proline 17, proline 29, cysteine 31, threonine 34, glutamine 37, threonine 53, proline 56, glycine 86, leucine 89, valine 97, glutamate 100, leucine 105, glycine 108, glycine 114, and lysine 117. The segment at 16–59 adopts an RING-type zinc-finger fold; that stretch reads CPLCLELFRAPVTPECGHTFCQGCLTGAPKNQDQNGSTPCPTCQ. The B box-type zinc finger occupies 83-124; that stretch reads VPKGHCLEHLDPLSVYCEQDKELICGVCASLGKHKGHNIITA. Residues 135 to 232 are a coiled coil; that stretch reads LPQQQVILQE…QMDGVLKDVE (98 aa). The B30.2/SPRY domain maps to 272 to 476; that stretch reads DEFKFQVWRK…LKIFYPPAEQ (205 aa).

This sequence belongs to the TRIM/RBCC family. As to quaternary structure, homodimer. Homooligomer; disulfide-linked. Oligomerizes on the phospholipid membrane. Disulfide bond formation at Cys-244 occurs in case of membrane damage that cause the entry of the oxidized milieu of the extracellular space, resulting in homooligomerization.

The protein resides in the cell membrane. It is found in the sarcolemma. Its subcellular location is the cytoplasmic vesicle membrane. The enzyme catalyses S-ubiquitinyl-[E2 ubiquitin-conjugating enzyme]-L-cysteine + [acceptor protein]-L-lysine = [E2 ubiquitin-conjugating enzyme]-L-cysteine + N(6)-ubiquitinyl-[acceptor protein]-L-lysine.. Its pathway is protein modification; protein ubiquitination. With respect to regulation, specifically binds phosphatidylserine. The binding to phospholipids enhances ubiquitination activity. In terms of biological role, muscle-specific E3 ubiquitin-protein ligase that plays a central role in cell membrane repair by nucleating the assembly of the repair machinery at injury sites. Acts as a sensor of oxidation: upon membrane damage, entry of extracellular oxidative environment results in disulfide bond formation and homooligomerization at the injury site. This oligomerization acts as a nucleation site for recruitment of TRIM72-containing vesicles to the injury site, leading to membrane patch formation. Probably acts upstream of the Ca(2+)-dependent membrane resealing process. Required for transport of DYSF to sites of cell injury during repair patch formation. Regulates membrane budding and exocytosis. May be involved in the regulation of the mobility of KCNB1-containing endocytic vesicles. The polypeptide is Tripartite motif-containing protein 72 (trim72) (Xenopus tropicalis (Western clawed frog)).